The primary structure comprises 295 residues: Putative sugar uptake protein YxfA (295 aa).

10 consecutive transmembrane segments (helical) span residues 4–26, 33–50, 54–72, 85–107, 117–135, 156–178, 188–206, 213–235, 241–263, and 270–291; these read VLLA…KFGG, LGMT…FLFR, LTWQ…WAIG, VSVA…GVFA, FILG…YFSA, ALTY…AVLW, IILP…MGRF, YVYQ…LMAA, AIAF…LFLG, and ELVY…LAIV.

This sequence belongs to the GRP transporter (TC 2.A.7.5) family.

Its subcellular location is the cell membrane. This Lactococcus lactis subsp. lactis (strain IL1403) (Streptococcus lactis) protein is Putative sugar uptake protein YxfA (yxfA).